We begin with the raw amino-acid sequence, 155 residues long: 2-C-methyl-D-erythritol 2,4-cyclodiphosphate synthase (155 aa).

Residues aspartate 10, histidine 12, and histidine 46 each coordinate a divalent metal cation. Residue 10–12 participates in 4-CDP-2-C-methyl-D-erythritol 2-phosphate binding; that stretch reads DSH. Residues 60–62, 65–69, and lysine 140 contribute to the 4-CDP-2-C-methyl-D-erythritol 2-phosphate site; these read DIG and FDEND.

This sequence belongs to the IspF family. In terms of assembly, homotrimer. Requires a divalent metal cation as cofactor.

It catalyses the reaction 4-CDP-2-C-methyl-D-erythritol 2-phosphate = 2-C-methyl-D-erythritol 2,4-cyclic diphosphate + CMP. The protein operates within isoprenoid biosynthesis; isopentenyl diphosphate biosynthesis via DXP pathway; isopentenyl diphosphate from 1-deoxy-D-xylulose 5-phosphate: step 4/6. Functionally, involved in the biosynthesis of isopentenyl diphosphate (IPP) and dimethylallyl diphosphate (DMAPP), two major building blocks of isoprenoid compounds. Catalyzes the conversion of 4-diphosphocytidyl-2-C-methyl-D-erythritol 2-phosphate (CDP-ME2P) to 2-C-methyl-D-erythritol 2,4-cyclodiphosphate (ME-CPP) with a corresponding release of cytidine 5-monophosphate (CMP). The polypeptide is 2-C-methyl-D-erythritol 2,4-cyclodiphosphate synthase (Mycoplasmoides gallisepticum (strain R(low / passage 15 / clone 2)) (Mycoplasma gallisepticum)).